Here is a 258-residue protein sequence, read N- to C-terminus: MAASVLNTVLRRLPMLSLFRGSHRVQVPLQTLCTKAPSEEDSLSSVPISPYKDEPWKYLESEEYQERYGSRPVWADYRRNHKGGVPPQRTRKTCIRRNKVVGNPCPICRDHKLHVDFRNVKLLEQFVCAHTGIIFYAPYTGVCVKQHKRLTQAIQKARDHGLLIYHIPQVEPRDLDFSTSHGAVSATPPAPTLVSGDPWYPWYNWKQPPERELSRLRRLYQGHLQEESGPPPESMPKMPPRTPAEASSTGQTGPQSAL.

The transit peptide at 1 to 35 (MAASVLNTVLRRLPMLSLFRGSHRVQVPLQTLCTK) directs the protein to the mitochondrion. 2 positions are modified to phosphoserine: serine 38 and serine 49. Positions 214–258 (SRLRRLYQGHLQEESGPPPESMPKMPPRTPAEASSTGQTGPQSAL) are disordered. The segment covering 229–242 (GPPPESMPKMPPRT) has biased composition (pro residues). Residues 245-258 (EASSTGQTGPQSAL) are compositionally biased toward polar residues.

This sequence belongs to the bacterial ribosomal protein bS18 family. Mitochondrion-specific ribosomal protein mS40 subfamily. Component of the mitochondrial small ribosomal subunit (mt-SSU). Mature mammalian 55S mitochondrial ribosomes consist of a small (28S) and a large (39S) subunit. The 28S small subunit contains a 12S ribosomal RNA (12S mt-rRNA) and 30 different proteins. The 39S large subunit contains a 16S rRNA (16S mt-rRNA), a copy of mitochondrial valine transfer RNA (mt-tRNA(Val)), which plays an integral structural role, and 52 different proteins. mS40 has a zinc binding site.

Its subcellular location is the mitochondrion. The protein is Small ribosomal subunit protein mS40 (MRPS18B) of Homo sapiens (Human).